We begin with the raw amino-acid sequence, 194 residues long: ATP-dependent Clp protease proteolytic subunit (194 aa).

Ser98 (nucleophile) is an active-site residue. Residue His123 is part of the active site.

It belongs to the peptidase S14 family. In terms of assembly, fourteen ClpP subunits assemble into 2 heptameric rings which stack back to back to give a disk-like structure with a central cavity, resembling the structure of eukaryotic proteasomes.

The protein localises to the cytoplasm. It carries out the reaction Hydrolysis of proteins to small peptides in the presence of ATP and magnesium. alpha-casein is the usual test substrate. In the absence of ATP, only oligopeptides shorter than five residues are hydrolyzed (such as succinyl-Leu-Tyr-|-NHMec, and Leu-Tyr-Leu-|-Tyr-Trp, in which cleavage of the -Tyr-|-Leu- and -Tyr-|-Trp bonds also occurs).. Functionally, cleaves peptides in various proteins in a process that requires ATP hydrolysis. Has a chymotrypsin-like activity. Plays a major role in the degradation of misfolded proteins. The sequence is that of ATP-dependent Clp protease proteolytic subunit from Syntrophus aciditrophicus (strain SB).